The following is a 59-amino-acid chain: Antitoxin RelB4 (59 aa).

The tract at residues 38–59 (VGEWLKTLGTPHQTPPPYSWRK) is disordered. A compositionally biased stretch (pro residues) spans 50–59 (QTPPPYSWRK).

In terms of biological role, antitoxin component of a type II toxin-antitoxin (TA) system. Neutralizes the effect of cognate toxin RelE4, but no other RelE or ParE toxin. The protein is Antitoxin RelB4 (relB4) of Caulobacter vibrioides (strain ATCC 19089 / CIP 103742 / CB 15) (Caulobacter crescentus).